Here is a 217-residue protein sequence, read N- to C-terminus: Translation initiation factor IF-3 (217 aa).

It belongs to the IF-3 family. Monomer.

It localises to the cytoplasm. IF-3 binds to the 30S ribosomal subunit and shifts the equilibrium between 70S ribosomes and their 50S and 30S subunits in favor of the free subunits, thus enhancing the availability of 30S subunits on which protein synthesis initiation begins. The chain is Translation initiation factor IF-3 from Synechococcus sp. (strain CC9902).